We begin with the raw amino-acid sequence, 877 residues long: Alanine--tRNA ligase (877 aa).

Zn(2+) contacts are provided by H556, H560, C657, and H661.

It belongs to the class-II aminoacyl-tRNA synthetase family. Zn(2+) is required as a cofactor.

It localises to the cytoplasm. The enzyme catalyses tRNA(Ala) + L-alanine + ATP = L-alanyl-tRNA(Ala) + AMP + diphosphate. Its function is as follows. Catalyzes the attachment of alanine to tRNA(Ala) in a two-step reaction: alanine is first activated by ATP to form Ala-AMP and then transferred to the acceptor end of tRNA(Ala). Also edits incorrectly charged Ser-tRNA(Ala) and Gly-tRNA(Ala) via its editing domain. This chain is Alanine--tRNA ligase, found in Wolbachia pipientis wMel.